The following is a 160-amino-acid chain: MAIQPLRLDPITVLGKQLVIELFDCVDTRFDDIQWIEESMLEAARQANATIITSAFHKFSPIGISGVVVIAESHLAIHTWPEYGYAAVDVFTCGDVLDGAQAVRVLSERLGSQRHLISSMDRGLGGHRLGLLSRSLAGNAPVDGDSPTLRWALGQGTGVA.

S73 acts as the Schiff-base intermediate with substrate; via pyruvic acid in catalysis. S73 bears the Pyruvic acid (Ser); by autocatalysis mark. H78 functions as the Proton acceptor; for processing activity in the catalytic mechanism. C93 functions as the Proton donor; for catalytic activity in the catalytic mechanism.

This sequence belongs to the prokaryotic AdoMetDC family. Type 1 subfamily. Heterotetramer of two alpha and two beta chains arranged as a dimer of alpha/beta heterodimers. It depends on pyruvate as a cofactor. In terms of processing, is synthesized initially as an inactive proenzyme. Formation of the active enzyme involves a self-maturation process in which the active site pyruvoyl group is generated from an internal serine residue via an autocatalytic post-translational modification. Two non-identical subunits are generated from the proenzyme in this reaction, and the pyruvate is formed at the N-terminus of the alpha chain, which is derived from the carboxyl end of the proenzyme. The post-translation cleavage follows an unusual pathway, termed non-hydrolytic serinolysis, in which the side chain hydroxyl group of the serine supplies its oxygen atom to form the C-terminus of the beta chain, while the remainder of the serine residue undergoes an oxidative deamination to produce ammonia and the pyruvoyl group blocking the N-terminus of the alpha chain.

The enzyme catalyses S-adenosyl-L-methionine + H(+) = S-adenosyl 3-(methylsulfanyl)propylamine + CO2. It functions in the pathway amine and polyamine biosynthesis; S-adenosylmethioninamine biosynthesis; S-adenosylmethioninamine from S-adenosyl-L-methionine: step 1/1. Its function is as follows. Catalyzes the decarboxylation of S-adenosylmethionine to S-adenosylmethioninamine (dcAdoMet), the propylamine donor required for the synthesis of the polyamines spermine and spermidine from the diamine putrescine. The protein is S-adenosylmethionine decarboxylase proenzyme of Pseudomonas paraeruginosa (strain DSM 24068 / PA7) (Pseudomonas aeruginosa (strain PA7)).